Reading from the N-terminus, the 59-residue chain is Large ribosomal subunit protein bL32 (59 aa).

Belongs to the bacterial ribosomal protein bL32 family.

This is Large ribosomal subunit protein bL32 from Polynucleobacter necessarius subsp. necessarius (strain STIR1).